The chain runs to 211 residues: Holliday junction resolvase RecU (211 aa).

Mg(2+) contacts are provided by T95, D97, E110, and Q129.

It belongs to the RecU family. Mg(2+) is required as a cofactor.

Its subcellular location is the cytoplasm. The enzyme catalyses Endonucleolytic cleavage at a junction such as a reciprocal single-stranded crossover between two homologous DNA duplexes (Holliday junction).. In terms of biological role, endonuclease that resolves Holliday junction intermediates in genetic recombination. Cleaves mobile four-strand junctions by introducing symmetrical nicks in paired strands. Promotes annealing of linear ssDNA with homologous dsDNA. Required for DNA repair, homologous recombination and chromosome segregation. The protein is Holliday junction resolvase RecU of Lactobacillus acidophilus (strain ATCC 700396 / NCK56 / N2 / NCFM).